The primary structure comprises 296 residues: Cytidine deaminase (296 aa).

CMP/dCMP-type deaminase domains are found at residues 47-167 (SQDE…FGPA) and 186-296 (ESAD…VDPV). Residue 88-90 (NLE) participates in substrate binding. Position 101 (H101) interacts with Zn(2+). E103 acts as the Proton donor in catalysis. Positions 128 and 131 each coordinate Zn(2+).

Belongs to the cytidine and deoxycytidylate deaminase family. Homodimer. It depends on Zn(2+) as a cofactor.

The catalysed reaction is cytidine + H2O + H(+) = uridine + NH4(+). The enzyme catalyses 2'-deoxycytidine + H2O + H(+) = 2'-deoxyuridine + NH4(+). Functionally, this enzyme scavenges exogenous and endogenous cytidine and 2'-deoxycytidine for UMP synthesis. This Shewanella loihica (strain ATCC BAA-1088 / PV-4) protein is Cytidine deaminase.